Reading from the N-terminus, the 756-residue chain is Glutathione biosynthesis bifunctional protein GshAB (756 aa).

The segment at 1-338 is glutamate--cysteine ligase; that stretch reads MNYRELMQKK…TGDIFNEQVA (338 aa). An ATP-grasp domain is found at 493–751; the sequence is KKILSAAGFH…LTMDVLKLLY (259 aa). Position 520 to 578 (520 to 578) interacts with ATP; sequence LRYANKAFVVKPKSTNYGLGITIFKEGASLEDFTEALRIAFKEDTAVLIEEFLPGTEYR. Mg(2+) contacts are provided by D700, E721, and N723. Residues D700, E721, and N723 each coordinate Mn(2+).

It in the N-terminal section; belongs to the glutamate--cysteine ligase type 1 family. Type 2 subfamily. In terms of assembly, monomer. Mg(2+) serves as cofactor. Requires Mn(2+) as cofactor.

The enzyme catalyses L-cysteine + L-glutamate + ATP = gamma-L-glutamyl-L-cysteine + ADP + phosphate + H(+). The catalysed reaction is gamma-L-glutamyl-L-cysteine + glycine + ATP = glutathione + ADP + phosphate + H(+). Its pathway is sulfur metabolism; glutathione biosynthesis; glutathione from L-cysteine and L-glutamate: step 1/2. It functions in the pathway sulfur metabolism; glutathione biosynthesis; glutathione from L-cysteine and L-glutamate: step 2/2. Its function is as follows. Synthesizes glutathione from L-glutamate and L-cysteine via gamma-L-glutamyl-L-cysteine. The polypeptide is Glutathione biosynthesis bifunctional protein GshAB (Enterococcus faecalis (strain ATCC 700802 / V583)).